The sequence spans 504 residues: Glycerol kinase (504 aa).

An ADP-binding site is contributed by threonine 14. The ATP site is built by threonine 14, threonine 15, and serine 16. Threonine 14 is a sn-glycerol 3-phosphate binding site. Arginine 18 serves as a coordination point for ADP. Residues arginine 84, glutamate 85, tyrosine 136, and aspartate 246 each contribute to the sn-glycerol 3-phosphate site. Residues arginine 84, glutamate 85, tyrosine 136, aspartate 246, and glutamine 247 each coordinate glycerol. Positions 268 and 311 each coordinate ADP. Threonine 268, glycine 311, glutamine 315, and glycine 412 together coordinate ATP. Residues glycine 412 and asparagine 416 each contribute to the ADP site.

The protein belongs to the FGGY kinase family.

The enzyme catalyses glycerol + ATP = sn-glycerol 3-phosphate + ADP + H(+). It functions in the pathway polyol metabolism; glycerol degradation via glycerol kinase pathway; sn-glycerol 3-phosphate from glycerol: step 1/1. Its activity is regulated as follows. Inhibited by fructose 1,6-bisphosphate (FBP). Functionally, key enzyme in the regulation of glycerol uptake and metabolism. Catalyzes the phosphorylation of glycerol to yield sn-glycerol 3-phosphate. The chain is Glycerol kinase from Aliivibrio fischeri (strain ATCC 700601 / ES114) (Vibrio fischeri).